We begin with the raw amino-acid sequence, 309 residues long: tRNA-dihydrouridine(16) synthase (309 aa).

FMN-binding positions include 7–9 (PME) and glutamine 68. Cysteine 98 functions as the Proton donor in the catalytic mechanism. Residues arginine 137, asparagine 198, and 220 to 221 (GC) each bind FMN.

It belongs to the Dus family. DusC subfamily. FMN is required as a cofactor.

The catalysed reaction is 5,6-dihydrouridine(16) in tRNA + NADP(+) = uridine(16) in tRNA + NADPH + H(+). It carries out the reaction 5,6-dihydrouridine(16) in tRNA + NAD(+) = uridine(16) in tRNA + NADH + H(+). Its function is as follows. Catalyzes the synthesis of 5,6-dihydrouridine (D), a modified base found in the D-loop of most tRNAs, via the reduction of the C5-C6 double bond in target uridines. Specifically modifies U16 in tRNAs. This Azotobacter vinelandii protein is tRNA-dihydrouridine(16) synthase.